Reading from the N-terminus, the 183-residue chain is Gamma-crystallin N-B (183 aa).

4 consecutive Beta/gamma crystallin 'Greek key' domains span residues 6-46 (GKIC…RVES), 47-89 (GAWI…RPIR), 95-136 (YRME…RVFG), and 138-180 (GAWV…RRIV).

This sequence belongs to the beta/gamma-crystallin family. As to quaternary structure, monomer.

Crystallins are the dominant structural components of the vertebrate eye lens. The polypeptide is Gamma-crystallin N-B (crygnb) (Danio rerio (Zebrafish)).